A 468-amino-acid chain; its full sequence is ATP synthase subunit beta (468 aa).

Residue 155–162 (GGAGVGKT) participates in ATP binding.

Belongs to the ATPase alpha/beta chains family. In terms of assembly, F-type ATPases have 2 components, CF(1) - the catalytic core - and CF(0) - the membrane proton channel. CF(1) has five subunits: alpha(3), beta(3), gamma(1), delta(1), epsilon(1). CF(0) has three main subunits: a(1), b(2) and c(9-12). The alpha and beta chains form an alternating ring which encloses part of the gamma chain. CF(1) is attached to CF(0) by a central stalk formed by the gamma and epsilon chains, while a peripheral stalk is formed by the delta and b chains.

The protein localises to the cell inner membrane. The catalysed reaction is ATP + H2O + 4 H(+)(in) = ADP + phosphate + 5 H(+)(out). Its function is as follows. Produces ATP from ADP in the presence of a proton gradient across the membrane. The catalytic sites are hosted primarily by the beta subunits. The polypeptide is ATP synthase subunit beta (Bdellovibrio bacteriovorus (strain ATCC 15356 / DSM 50701 / NCIMB 9529 / HD100)).